The primary structure comprises 144 residues: Transcription antitermination protein NusB (144 aa).

The protein belongs to the NusB family.

Involved in transcription antitermination. Required for transcription of ribosomal RNA (rRNA) genes. Binds specifically to the boxA antiterminator sequence of the ribosomal RNA (rrn) operons. This chain is Transcription antitermination protein NusB, found in Haemophilus influenzae (strain PittEE).